We begin with the raw amino-acid sequence, 369 residues long: Glycolate oxidase 1 (369 aa).

In terms of domain architecture, FMN hydroxy acid dehydrogenase spans 1-360; sequence MGEITNVMEY…TRAHIYTDAD (360 aa). Residue Tyr-25 participates in glyoxylate binding. Residues 78-80, Ser-107, 128-130, and Thr-156 contribute to the FMN site; these read PSA and QLY. Tyr-130 lines the glyoxylate pocket. Arg-165 contacts glyoxylate. FMN contacts are provided by Lys-231 and Ser-253. 2 residues coordinate glyoxylate: His-255 and Arg-258. His-255 (proton acceptor) is an active-site residue. Residues 286–290 and 309–310 each bind FMN; these read DGGVR and GR. A Microbody targeting signal motif is present at residues 367–369; sequence PRL.

Belongs to the FMN-dependent alpha-hydroxy acid dehydrogenase family. Homotetramer. Interacts with rice dwarf virus (RDV) P8. This interaction promotes viral P8 relocation to virus factories peripheral to peroxisomes. It depends on FMN as a cofactor.

Its subcellular location is the peroxisome. The enzyme catalyses glycolate + O2 = glyoxylate + H2O2. The protein operates within photosynthesis; photorespiration; glycine from 2-phosphoglycolate: step 2/3. Functionally, catalyzes the oxidation of glycolate to glyoxylate, with a reduction of O2 to H2O2. Is a key enzyme in photorespiration in plants. Can exert a strong regulation over photosynthesis, possibly through a feed-back inhibition on Rubisco activase. Does not seem to play a role in oxalate accumulation. This Oryza sativa subsp. indica (Rice) protein is Glycolate oxidase 1 (GLO1).